The chain runs to 317 residues: Single myb histone 6 (317 aa).

In terms of domain architecture, HTH myb-type spans 1–61 (MGAPKQRWTS…KWRNMNVIVS (61 aa)). A DNA-binding region (H-T-H motif) is located at residues 28-57 (WRTILKDPEFSSTLCYRSNVDLKDKWRNMN). An H15 domain is found at 121 to 189 (KSHRLDNIIM…KVNRKYRIAP (69 aa)). Residues 244-288 (VAAARAVAEAEAIMAEAEAAAKEAEAAEAEAQAAQAFAEAAFLTL) adopt a coiled-coil conformation.

It belongs to the histone H1/H5 family. SMH subfamily. In terms of assembly, forms a homodimer and heterodimers.

The protein resides in the nucleus. It is found in the chromosome. The protein localises to the nucleolus. It localises to the telomere. In terms of biological role, binds preferentially double-stranded telomeric repeats, but may also bind to the single telomeric strand. This chain is Single myb histone 6 (SMH6), found in Zea mays (Maize).